The primary structure comprises 313 residues: Ribosomal RNA small subunit methyltransferase H (313 aa).

S-adenosyl-L-methionine is bound by residues 35–37, Asp-55, Phe-81, Asp-103, and Gln-110; that span reads GGH.

This sequence belongs to the methyltransferase superfamily. RsmH family.

It localises to the cytoplasm. The catalysed reaction is cytidine(1402) in 16S rRNA + S-adenosyl-L-methionine = N(4)-methylcytidine(1402) in 16S rRNA + S-adenosyl-L-homocysteine + H(+). Specifically methylates the N4 position of cytidine in position 1402 (C1402) of 16S rRNA. This chain is Ribosomal RNA small subunit methyltransferase H, found in Pseudomonas syringae pv. tomato (strain ATCC BAA-871 / DC3000).